A 493-amino-acid chain; its full sequence is Sulfoacetaldehyde dehydrogenase (acylating) (493 aa).

A compositionally biased stretch (basic residues) spans 1–10 (MSVQILHRRQ). The segment at 1-21 (MSVQILHRRQSNNSDLPLPTA) is disordered. Cys273 serves as the catalytic Nucleophile.

It belongs to the aldehyde dehydrogenase family. Homodimer.

It is found in the cytoplasm. The enzyme catalyses sulfoacetaldehyde + NADP(+) + CoA = sulfoacetyl-CoA + NADPH + H(+). Its function is as follows. Involved in the degradation of sulfoacetate, a widespread natural product. Catalyzes the conversion of sulfoacetyl-CoA and NADPH to sulfoacetaldehyde, CoA and NADP(+). Specific for NADP(+) and sulfoacetaldehyde. This Cupriavidus necator (strain ATCC 17699 / DSM 428 / KCTC 22496 / NCIMB 10442 / H16 / Stanier 337) (Ralstonia eutropha) protein is Sulfoacetaldehyde dehydrogenase (acylating).